Reading from the N-terminus, the 63-residue chain is MAFLKKSLFLVLFLGLVSLSICEKEKKEQEDEDENEEEKESEEGSEEKRGLLDTLGGILGLGR.

The first 22 residues, 1-22, serve as a signal peptide directing secretion; that stretch reads MAFLKKSLFLVLFLGLVSLSIC. Residues 23 to 49 constitute a propeptide that is removed on maturation; it reads EKEKKEQEDEDENEEEKESEEGSEEKR. The interval 25 to 63 is disordered; it reads EKKEQEDEDENEEEKESEEGSEEKRGLLDTLGGILGLGR. Acidic residues predominate over residues 30–45; the sequence is EDEDENEEEKESEEGS. Leucine amide is present on L61.

As to expression, expressed by the skin glands.

Its subcellular location is the secreted. Functionally, antimicrobial peptide with selective activity. Is only active against Micrococcus luteus (MIC=25 ug/ml) and not against Bacillus cereus, Escherichia coli, Leuconostoc mesenteroides, Micrococcus luteus, Pastewella haemolytica, Staphylococcus aureus, Streptococcus faecalis and Streptococcus uberis. The protein is Frenatin 1.1 of Nyctimystes infrafrenatus (White-lipped tree frog).